Reading from the N-terminus, the 167-residue chain is 2-C-methyl-D-erythritol 2,4-cyclodiphosphate synthase (167 aa).

Aspartate 15 and histidine 17 together coordinate a divalent metal cation. 4-CDP-2-C-methyl-D-erythritol 2-phosphate contacts are provided by residues 15–17 (DIH) and 43–44 (HS). Histidine 51 is a binding site for a divalent metal cation. Residues 65–67 (DIG), 141–144 (TTNE), and arginine 151 contribute to the 4-CDP-2-C-methyl-D-erythritol 2-phosphate site.

This sequence belongs to the IspF family. As to quaternary structure, homotrimer. It depends on a divalent metal cation as a cofactor.

The catalysed reaction is 4-CDP-2-C-methyl-D-erythritol 2-phosphate = 2-C-methyl-D-erythritol 2,4-cyclic diphosphate + CMP. It functions in the pathway isoprenoid biosynthesis; isopentenyl diphosphate biosynthesis via DXP pathway; isopentenyl diphosphate from 1-deoxy-D-xylulose 5-phosphate: step 4/6. In terms of biological role, involved in the biosynthesis of isopentenyl diphosphate (IPP) and dimethylallyl diphosphate (DMAPP), two major building blocks of isoprenoid compounds. Catalyzes the conversion of 4-diphosphocytidyl-2-C-methyl-D-erythritol 2-phosphate (CDP-ME2P) to 2-C-methyl-D-erythritol 2,4-cyclodiphosphate (ME-CPP) with a corresponding release of cytidine 5-monophosphate (CMP). In Prochlorococcus marinus (strain MIT 9312), this protein is 2-C-methyl-D-erythritol 2,4-cyclodiphosphate synthase.